Here is a 346-residue protein sequence, read N- to C-terminus: Protein RecA (346 aa).

Residue 79 to 86 (GPESSGKT) coordinates ATP.

The protein belongs to the RecA family.

Its subcellular location is the cytoplasm. Its function is as follows. Can catalyze the hydrolysis of ATP in the presence of single-stranded DNA, the ATP-dependent uptake of single-stranded DNA by duplex DNA, and the ATP-dependent hybridization of homologous single-stranded DNAs. It interacts with LexA causing its activation and leading to its autocatalytic cleavage. The sequence is that of Protein RecA from Chlorobaculum tepidum (strain ATCC 49652 / DSM 12025 / NBRC 103806 / TLS) (Chlorobium tepidum).